Reading from the N-terminus, the 112-residue chain is Prothymosin alpha (112 aa).

Met-1 is modified (N-acetylmethionine). The interval 1–112 (MSDAAVDTSS…KKQKKTDEDD (112 aa)) is disordered. Ser-2 is modified (N-acetylserine; in Prothymosin alpha, N-terminally processed). At Ser-2 the chain carries Phosphoserine. Thr-8 carries the post-translational modification Phosphothreonine. Ser-9 and Ser-10 each carry phosphoserine. Phosphothreonine occurs at positions 13 and 14. Residues 13–31 (TTKDLKEKKEVVEEAENGR) show a composition bias toward basic and acidic residues. Lys-15 is subject to N6-acetyllysine; alternate. Lys-15 bears the N6-succinyllysine; alternate mark. The span at 43-84 (ENGEQEADNEVDEEEEEGGEEEEEEEEGDGEEEDGDEDEEAE) shows a compositional bias: acidic residues. Residues 101–112 (ETKKQKKTDEDD) show a composition bias toward basic and acidic residues. Thr-102 is subject to Phosphothreonine. Lys-103 carries the post-translational modification N6-acetyllysine; alternate. Lys-103 is covalently cross-linked (Glycyl lysine isopeptide (Lys-Gly) (interchain with G-Cter in SUMO2); alternate). Thr-108 is subject to Phosphothreonine.

It belongs to the pro/parathymosin family. As to quaternary structure, interacts with NUPR1; regulates apoptotic process. In terms of processing, covalently linked to a small RNA of about 20 nucleotides.

It is found in the nucleus. Functionally, prothymosin alpha may mediate immune function by conferring resistance to certain opportunistic infections. The protein is Prothymosin alpha (Ptma) of Rattus norvegicus (Rat).